A 54-amino-acid chain; its full sequence is Large ribosomal subunit protein bL33A (54 aa).

Belongs to the bacterial ribosomal protein bL33 family.

This Mycobacteroides abscessus (strain ATCC 19977 / DSM 44196 / CCUG 20993 / CIP 104536 / JCM 13569 / NCTC 13031 / TMC 1543 / L948) (Mycobacterium abscessus) protein is Large ribosomal subunit protein bL33A.